A 495-amino-acid polypeptide reads, in one-letter code: Prenylcysteine oxidase 1-like (495 aa).

The first 22 residues, 1-22, serve as a signal peptide directing secretion; it reads MARAAPLLAVLATVLTTAAAGG. Residues asparagine 185 and asparagine 343 are each glycosylated (N-linked (GlcNAc...) asparagine).

Belongs to the prenylcysteine oxidase family. FAD serves as cofactor.

It is found in the secreted. Functionally, likely to have oxidoreductase activity. Required in the mevalonate pathway to regulate prenylation and enhances the bactericidal activity of neutrophils. This chain is Prenylcysteine oxidase 1-like (Pcyox1l), found in Mus musculus (Mouse).